The chain runs to 357 residues: UDP-N-acetylglucosamine--N-acetylmuramyl-(pentapeptide) pyrophosphoryl-undecaprenol N-acetylglucosamine transferase (357 aa).

Residues 11-13 (TGG), Asn123, Arg159, Ser187, Ile241, 260-265 (ALTVAE), and Gln286 contribute to the UDP-N-acetyl-alpha-D-glucosamine site.

It belongs to the glycosyltransferase 28 family. MurG subfamily.

Its subcellular location is the cell inner membrane. The enzyme catalyses di-trans,octa-cis-undecaprenyl diphospho-N-acetyl-alpha-D-muramoyl-L-alanyl-D-glutamyl-meso-2,6-diaminopimeloyl-D-alanyl-D-alanine + UDP-N-acetyl-alpha-D-glucosamine = di-trans,octa-cis-undecaprenyl diphospho-[N-acetyl-alpha-D-glucosaminyl-(1-&gt;4)]-N-acetyl-alpha-D-muramoyl-L-alanyl-D-glutamyl-meso-2,6-diaminopimeloyl-D-alanyl-D-alanine + UDP + H(+). The protein operates within cell wall biogenesis; peptidoglycan biosynthesis. Cell wall formation. Catalyzes the transfer of a GlcNAc subunit on undecaprenyl-pyrophosphoryl-MurNAc-pentapeptide (lipid intermediate I) to form undecaprenyl-pyrophosphoryl-MurNAc-(pentapeptide)GlcNAc (lipid intermediate II). This chain is UDP-N-acetylglucosamine--N-acetylmuramyl-(pentapeptide) pyrophosphoryl-undecaprenol N-acetylglucosamine transferase, found in Aromatoleum aromaticum (strain DSM 19018 / LMG 30748 / EbN1) (Azoarcus sp. (strain EbN1)).